A 434-amino-acid polypeptide reads, in one-letter code: Evolutionarily conserved signaling intermediate in Toll pathway, mitochondrial (434 aa).

The N-terminal 48 residues, 1–48, are a transit peptide targeting the mitochondrion; the sequence is MSWVQVNLLARGLSRGWGSICRTVLSGTPFAQPSLQARGLHCSAVTHK. Residue Lys-371 forms a Glycyl lysine isopeptide (Lys-Gly) (interchain with G-Cter in ubiquitin) linkage. A disordered region spans residues 403–434; that stretch reads TRLEGQSPPHSPPKGPEEDDEAIQAQQRQGQS.

The protein belongs to the ECSIT family. As to quaternary structure, interacts with MAP3K1, SMAD4 and TRAF6. Interacts with SMAD1 only after BMP4-treatment. Part of the mitochondrial complex I assembly/MCIA complex that comprises at least the core subunits TMEM126B, NDUFAF1, ECSIT and ACAD9 and complement subunits such as COA1 and TMEM186. Interacts with NDUFAF1. Interacts with ACAD9. Interacts with TRIM59. Interacts with TMEM70 and TMEM242. Interacts (when ubiquitinated) with NF-kappa-B subunits RELA and NFKB1. Interacts with RIGI, IFIT1 and MAVS; these interactions promote RLR-mediated type I IFN induction. Interacts with SQSTM1; this interaction inhibits TLR4 signaling via functional regulation of the TRAF6-ECSIT complex. Interacts with cereblon/CRBN; this interaction inhibits the ubiquitination of ECSIT. In terms of processing, ubiquitinated on Lys-371; leading to translocation in the nucleus together with RELA and NFKB1 and expression of NF-kappa-B-dependent genes.

It is found in the cytoplasm. The protein localises to the nucleus. Its subcellular location is the mitochondrion. In terms of biological role, adapter protein that plays a role in different signaling pathways including TLRs and IL-1 pathways or innate antiviral induction signaling. Plays a role in the activation of NF-kappa-B by forming a signal complex with TRAF6 and TAK1/MAP3K7 to activate TAK1/MAP3K7 leading to activation of IKKs. Once ubiquitinated, interacts with the dissociated RELA and NFKB1 proteins and translocates to the nucleus where it induces NF-kappa-B-dependent gene expression. Plays a role in innate antiviral immune response by bridging the pattern recognition receptors RIGI and MDA5/IFIT1 to the MAVS complex at the mitochondrion. Promotes proteolytic activation of MAP3K1. Involved in the BMP signaling pathway. Required for normal embryonic development. Functionally, as part of the MCIA complex, involved in the assembly of the mitochondrial complex I. This is Evolutionarily conserved signaling intermediate in Toll pathway, mitochondrial from Rattus norvegicus (Rat).